Reading from the N-terminus, the 412-residue chain is CHRNA7-FAM7A fusion protein (412 aa).

5 helical membrane passes run glycine 144–leucine 164, isoleucine 172–isoleucine 192, glutamine 205–leucine 225, tryptophan 240–arginine 254, and leucine 380–alanine 400.

Belongs to the ligand-gated ion channel (TC 1.A.9) family. In terms of tissue distribution, expressed in hippocampus.

The protein localises to the membrane. This chain is CHRNA7-FAM7A fusion protein (CHRFAM7A), found in Homo sapiens (Human).